A 159-amino-acid polypeptide reads, in one-letter code: MSSEVSSDNPIYGPFFGVMGAASAIIFSALGAAYGTAKSGTGIAAMSVMRPELIMKSIIPVVMAGIIAIYGLVVAVLIAGALEEPSKYSLYRGFIHLGAGLAVGFSGLAAGFAIGIVGDAGVRGTAQQPRLFVGMILILIFAEVLGLYGLIVAIYLYTK.

At 1-12 the chain is on the lumenal side; the sequence is MSSEVSSDNPIY. A helical membrane pass occupies residues 13-35; that stretch reads GPFFGVMGAASAIIFSALGAAYG. At 36–57 the chain is on the cytoplasmic side; the sequence is TAKSGTGIAAMSVMRPELIMKS. A helical transmembrane segment spans residues 58–78; the sequence is IIPVVMAGIIAIYGLVVAVLI. At 79-96 the chain is on the lumenal side; that stretch reads AGALEEPSKYSLYRGFIH. Residues 97–118 form a helical membrane-spanning segment; the sequence is LGAGLAVGFSGLAAGFAIGIVG. Residues 119 to 130 lie on the Cytoplasmic side of the membrane; it reads DAGVRGTAQQPR. A helical membrane pass occupies residues 131–156; it reads LFVGMILILIFAEVLGLYGLIVAIYL. At 157–159 the chain is on the lumenal side; the sequence is YTK.

It belongs to the V-ATPase proteolipid subunit family. V-ATPase is a heteromultimeric enzyme made up of two complexes: the ATP-hydrolytic V1 complex and the proton translocation V0 complex. The V1 complex consists of three catalytic AB heterodimers that form a heterohexamer, three peripheral stalks each consisting of EG heterodimers, one central rotor including subunits D and F, and the regulatory subunits C and H. The proton translocation complex V0 consists of the proton transport subunit a, a ring of proteolipid subunits c9c'', rotary subunit d, subunits e and f, and the accessory subunits VhaAC45 and ATP6AP2. As to expression, expressed in the larval middle mid-gut; predominantly in the copper cell region with lower levels of expression in the interstitial cells.

The protein localises to the membrane. Its function is as follows. Proton-conducting pore forming subunit of the V0 complex of vacuolar(H+)-ATPase (V-ATPase), a multisubunit enzyme composed of a peripheral complex (V1) that hydrolyzes ATP and a membrane integral complex (V0) that translocates protons. V-ATPase is responsible for acidifying and maintaining the pH of intracellular compartments and in some cell types, is targeted to the plasma membrane, where it is responsible for acidifying the extracellular environment. In enterocytes, acts as part of a pHCl-2 sensory pathway which mediates Tor-dependent larval growth and metabolism in response to zinc availability. Likely acts in maintaining enterocyte lysosomal acidification which consequently promotes Tor activation at the lysosome membrane. The sequence is that of V-type proton ATPase 16 kDa proteolipid subunit c (Vha16-1) from Drosophila melanogaster (Fruit fly).